Reading from the N-terminus, the 112-residue chain is uncharacterized protein (112 aa).

This sequence to U.parvum UU089.1.

This is an uncharacterized protein from Synechocystis sp. (strain ATCC 27184 / PCC 6803 / Kazusa).